The primary structure comprises 209 residues: Nucleoside triphosphate pyrophosphatase (209 aa).

Asp74 functions as the Proton acceptor in the catalytic mechanism.

This sequence belongs to the Maf family. The cofactor is a divalent metal cation.

It is found in the cytoplasm. The catalysed reaction is a ribonucleoside 5'-triphosphate + H2O = a ribonucleoside 5'-phosphate + diphosphate + H(+). The enzyme catalyses a 2'-deoxyribonucleoside 5'-triphosphate + H2O = a 2'-deoxyribonucleoside 5'-phosphate + diphosphate + H(+). Its function is as follows. Nucleoside triphosphate pyrophosphatase. May have a dual role in cell division arrest and in preventing the incorporation of modified nucleotides into cellular nucleic acids. This chain is Nucleoside triphosphate pyrophosphatase, found in Neorickettsia sennetsu (strain ATCC VR-367 / Miyayama) (Ehrlichia sennetsu).